The chain runs to 203 residues: A-type ATP synthase subunit E (203 aa).

The protein belongs to the V-ATPase E subunit family. In terms of assembly, has multiple subunits with at least A(3), B(3), C, D, E, F, H, I and proteolipid K(x).

It is found in the cell membrane. Component of the A-type ATP synthase that produces ATP from ADP in the presence of a proton gradient across the membrane. This Methanococcus maripaludis (strain DSM 14266 / JCM 13030 / NBRC 101832 / S2 / LL) protein is A-type ATP synthase subunit E.